The chain runs to 244 residues: Derlin-2.2 (244 aa).

Residues 1–21 are Cytoplasmic-facing; it reads MAQAVEEWYKQMPIITRSYLT. The helical transmembrane segment at 22 to 42 threads the bilayer; that stretch reads AAVITTVGCSLDIISPYNLYL. The Lumenal portion of the chain corresponds to 43 to 96; it reads NPTLVVKQYQYWRLVTNFLYFRKMDLDFMFHMFFLARYCKLLEENSFRGKTADF. A helical membrane pass occupies residues 97 to 117; the sequence is LYMLLFGASVLTGIVLIGGMI. The Cytoplasmic segment spans residues 118–121; sequence PYLS. A helical membrane pass occupies residues 122–142; the sequence is ASFAKIIFLSNSLTFMMVYVW. Topologically, residues 143–152 are lumenal; sequence SKQNPYIHMS. A helical transmembrane segment spans residues 153 to 173; sequence FLGLFTFTAAYLPWVLLGFSI. Residues 174-244 lie on the Cytoplasmic side of the membrane; the sequence is LVGASAWVDL…AAPFDEIHQD (71 aa).

This sequence belongs to the derlin family.

The protein localises to the endoplasmic reticulum membrane. May be involved in the degradation process of specific misfolded endoplasmic reticulum (ER) luminal proteins. In Arabidopsis thaliana (Mouse-ear cress), this protein is Derlin-2.2 (DER2.2).